Here is a 149-residue protein sequence, read N- to C-terminus: Nucleoside diphosphate kinase (149 aa).

Lysine 9, phenylalanine 57, arginine 85, threonine 91, arginine 102, and asparagine 112 together coordinate ATP. The Pros-phosphohistidine intermediate role is filled by histidine 115.

This sequence belongs to the NDK family. In terms of assembly, homotetramer. Mg(2+) serves as cofactor.

The protein localises to the cytoplasm. The catalysed reaction is a 2'-deoxyribonucleoside 5'-diphosphate + ATP = a 2'-deoxyribonucleoside 5'-triphosphate + ADP. It carries out the reaction a ribonucleoside 5'-diphosphate + ATP = a ribonucleoside 5'-triphosphate + ADP. Its function is as follows. Major role in the synthesis of nucleoside triphosphates other than ATP. The ATP gamma phosphate is transferred to the NDP beta phosphate via a ping-pong mechanism, using a phosphorylated active-site intermediate. The polypeptide is Nucleoside diphosphate kinase (Nostoc punctiforme (strain ATCC 29133 / PCC 73102)).